The primary structure comprises 500 residues: Pyridine nucleotide-disulfide oxidoreductase domain-containing protein 1 (500 aa).

Methionine 1 is subject to N-acetylmethionine.

It belongs to the class-I pyridine nucleotide-disulfide oxidoreductase family. PYROXD1 subfamily. The cofactor is FAD.

It localises to the nucleus. The protein localises to the cytoplasm. It is found in the myofibril. Its subcellular location is the sarcomere. In terms of biological role, probable FAD-dependent oxidoreductase; involved in the cellular oxidative stress response. Required for normal sarcomere structure and muscle fiber integrity. The sequence is that of Pyridine nucleotide-disulfide oxidoreductase domain-containing protein 1 (PYROXD1) from Pongo abelii (Sumatran orangutan).